The primary structure comprises 217 residues: Adenylate kinase (217 aa).

ATP is bound at residue 10–15; sequence GAGKGT. The segment at 30–59 is NMP; sequence STGDIFRSNVSQGTPLGVQAKRYMDAGELV. AMP-binding positions include threonine 31, arginine 36, 57-59, 85-88, and glutamine 92; these read ELV and GFPR. The tract at residues 126–163 is LID; the sequence is GRRTCRGCGKVWHVEFDAPSQEGRCDRCGAELFQRDDD. Arginine 127 provides a ligand contact to ATP. The Zn(2+) site is built by cysteine 130, cysteine 133, cysteine 150, and cysteine 153. Positions 160 and 171 each coordinate AMP. Residue glycine 199 coordinates ATP.

Belongs to the adenylate kinase family. In terms of assembly, monomer.

The protein resides in the cytoplasm. It catalyses the reaction AMP + ATP = 2 ADP. The protein operates within purine metabolism; AMP biosynthesis via salvage pathway; AMP from ADP: step 1/1. Catalyzes the reversible transfer of the terminal phosphate group between ATP and AMP. Plays an important role in cellular energy homeostasis and in adenine nucleotide metabolism. The polypeptide is Adenylate kinase (Salinispora tropica (strain ATCC BAA-916 / DSM 44818 / JCM 13857 / NBRC 105044 / CNB-440)).